Here is a 196-residue protein sequence, read N- to C-terminus: MLTIGVLGLQGAVREHIQSIEACGAEGKIIKRAEELVSVDGLIIPGGESTTMRRLMDTYQFIEPIKAFAAKGKPIFGTCAGLIMLAKHIEDRDNAHLGLLNVSVARNSFGRQVDSFEADLEVKGLDAPFTGVFIRAPHIISADESVEVMAEYDGRIVMAKENNILGCSFHPELTDDHRLTQLFVEMVKTYKTKLAV.

L-glutamine is bound at residue 47-49 (GES). C79 (nucleophile) is an active-site residue. L-glutamine-binding positions include R106 and 134 to 135 (IR). Residues H170 and E172 each act as charge relay system in the active site.

Belongs to the glutaminase PdxT/SNO family. As to quaternary structure, in the presence of PdxS, forms a dodecamer of heterodimers. Only shows activity in the heterodimer.

It carries out the reaction aldehydo-D-ribose 5-phosphate + D-glyceraldehyde 3-phosphate + L-glutamine = pyridoxal 5'-phosphate + L-glutamate + phosphate + 3 H2O + H(+). The enzyme catalyses L-glutamine + H2O = L-glutamate + NH4(+). It functions in the pathway cofactor biosynthesis; pyridoxal 5'-phosphate biosynthesis. Catalyzes the hydrolysis of glutamine to glutamate and ammonia as part of the biosynthesis of pyridoxal 5'-phosphate. The resulting ammonia molecule is channeled to the active site of PdxS. In Bacillus pumilus (strain SAFR-032), this protein is Pyridoxal 5'-phosphate synthase subunit PdxT.